A 411-amino-acid chain; its full sequence is Serine--tRNA ligase (411 aa).

Residue 226–228 coordinates L-serine; it reads TSE. 257–259 contacts ATP; that stretch reads RKE. Glutamate 280 contacts L-serine. 344–347 contacts ATP; it reads EISS. An L-serine-binding site is contributed by serine 379.

Belongs to the class-II aminoacyl-tRNA synthetase family. Type-1 seryl-tRNA synthetase subfamily. Homodimer. The tRNA molecule binds across the dimer.

The protein resides in the cytoplasm. The enzyme catalyses tRNA(Ser) + L-serine + ATP = L-seryl-tRNA(Ser) + AMP + diphosphate + H(+). It catalyses the reaction tRNA(Sec) + L-serine + ATP = L-seryl-tRNA(Sec) + AMP + diphosphate + H(+). It participates in aminoacyl-tRNA biosynthesis; selenocysteinyl-tRNA(Sec) biosynthesis; L-seryl-tRNA(Sec) from L-serine and tRNA(Sec): step 1/1. In terms of biological role, catalyzes the attachment of serine to tRNA(Ser). Is also able to aminoacylate tRNA(Sec) with serine, to form the misacylated tRNA L-seryl-tRNA(Sec), which will be further converted into selenocysteinyl-tRNA(Sec). In Campylobacter jejuni subsp. doylei (strain ATCC BAA-1458 / RM4099 / 269.97), this protein is Serine--tRNA ligase.